The following is a 542-amino-acid chain: Trans-alpha-bergamotene synthase (542 aa).

Positions 295, 299, 439, 443, and 447 each coordinate Mg(2+). The DDXXD motif motif lies at 295–299 (DDFYD).

This sequence belongs to the terpene synthase family. Requires Mg(2+) as cofactor.

It carries out the reaction (2E,6E)-farnesyl diphosphate = (1S,5S,6R)-alpha-bergamotene + diphosphate. Its pathway is secondary metabolite biosynthesis; terpenoid biosynthesis. In terms of biological role, sesquiterpene synthase converting farnesyl diphosphate to trans-alpha-bergamotene as the major product. The sequence is that of Trans-alpha-bergamotene synthase from Phyla dulcis (Aztec sweet herb).